A 677-amino-acid chain; its full sequence is DNA-directed RNA polymerase subunit beta' (677 aa).

Residues Cys-69, Cys-71, Cys-87, and Cys-90 each coordinate Zn(2+). The Mg(2+) site is built by Asp-489, Asp-491, and Asp-493.

The protein belongs to the RNA polymerase beta' chain family. RpoC1 subfamily. In terms of assembly, in plastids the minimal PEP RNA polymerase catalytic core is composed of four subunits: alpha, beta, beta', and beta''. When a (nuclear-encoded) sigma factor is associated with the core the holoenzyme is formed, which can initiate transcription. The cofactor is Mg(2+). It depends on Zn(2+) as a cofactor.

The protein resides in the plastid. It is found in the chloroplast. The catalysed reaction is RNA(n) + a ribonucleoside 5'-triphosphate = RNA(n+1) + diphosphate. Its function is as follows. DNA-dependent RNA polymerase catalyzes the transcription of DNA into RNA using the four ribonucleoside triphosphates as substrates. This Spinacia oleracea (Spinach) protein is DNA-directed RNA polymerase subunit beta'.